Here is a 176-residue protein sequence, read N- to C-terminus: Large ribosomal subunit protein uL10 (176 aa).

This sequence belongs to the universal ribosomal protein uL10 family. As to quaternary structure, part of the ribosomal stalk of the 50S ribosomal subunit. The N-terminus interacts with L11 and the large rRNA to form the base of the stalk. The C-terminus forms an elongated spine to which L12 dimers bind in a sequential fashion forming a multimeric L10(L12)X complex.

Its function is as follows. Forms part of the ribosomal stalk, playing a central role in the interaction of the ribosome with GTP-bound translation factors. In Nocardia farcinica (strain IFM 10152), this protein is Large ribosomal subunit protein uL10.